The primary structure comprises 182 residues: Lipoprotein signal peptidase (182 aa).

4 helical membrane passes run 12–32, 40–60, 70–90, and 97–117; these read FLWI…TVID, IQVL…AFSF, WFFT…LKQS, and LPVA…DRLV. Active-site residues include Asp-123 and Asp-141. A helical transmembrane segment spans residues 136–156; it reads AFNIADSAIFIGAALLIIDMF. The tract at residues 161 to 182 is disordered; that stretch reads KKSEENGAESKAGSANSSETIK. The segment covering 173–182 has biased composition (polar residues); the sequence is GSANSSETIK.

Belongs to the peptidase A8 family.

Its subcellular location is the cell inner membrane. The enzyme catalyses Release of signal peptides from bacterial membrane prolipoproteins. Hydrolyzes -Xaa-Yaa-Zaa-|-(S,diacylglyceryl)Cys-, in which Xaa is hydrophobic (preferably Leu), and Yaa (Ala or Ser) and Zaa (Gly or Ala) have small, neutral side chains.. It participates in protein modification; lipoprotein biosynthesis (signal peptide cleavage). Its function is as follows. This protein specifically catalyzes the removal of signal peptides from prolipoproteins. The polypeptide is Lipoprotein signal peptidase (Alteromonas mediterranea (strain DSM 17117 / CIP 110805 / LMG 28347 / Deep ecotype)).